The sequence spans 469 residues: L-seryl-tRNA(Sec) selenium transferase (469 aa).

N6-(pyridoxal phosphate)lysine is present on lysine 295.

This sequence belongs to the SelA family. It depends on pyridoxal 5'-phosphate as a cofactor.

The protein localises to the cytoplasm. The enzyme catalyses L-seryl-tRNA(Sec) + selenophosphate + H(+) = L-selenocysteinyl-tRNA(Sec) + phosphate. Its pathway is aminoacyl-tRNA biosynthesis; selenocysteinyl-tRNA(Sec) biosynthesis; selenocysteinyl-tRNA(Sec) from L-seryl-tRNA(Sec) (bacterial route): step 1/1. Converts seryl-tRNA(Sec) to selenocysteinyl-tRNA(Sec) required for selenoprotein biosynthesis. In Methylocella silvestris (strain DSM 15510 / CIP 108128 / LMG 27833 / NCIMB 13906 / BL2), this protein is L-seryl-tRNA(Sec) selenium transferase.